A 347-amino-acid polypeptide reads, in one-letter code: 5-deoxyribose 1-phosphate isomerase (347 aa).

Substrate is bound by residues 48 to 50 (RGA), Arg91, and Gln198. Residue Asp239 is the Proton donor of the active site. 249–250 (NK) contacts substrate.

The protein belongs to the EIF-2B alpha/beta/delta subunits family. DrdI subfamily.

It carries out the reaction 5-deoxy-alpha-D-ribose 1-phosphate = 5-deoxy-D-ribulose 1-phosphate. Its pathway is carbohydrate degradation. Catalyzes the isomerization of 5-deoxy-alpha-D-ribose 1-phosphate to 5-deoxy-D-ribulose 1-phosphate, as part of a 5-deoxyribose salvage pathway that recycles this toxic radical SAM enzyme by-product to mainstream metabolites. The protein is 5-deoxyribose 1-phosphate isomerase of Bacillus thuringiensis subsp. konkukian (strain 97-27).